Here is a 1179-residue protein sequence, read N- to C-terminus: ATP-dependent helicase/deoxyribonuclease subunit B (1179 aa).

It belongs to the helicase family. AddB/RexB type 2 subfamily. As to quaternary structure, heterodimer of AddA and RexB. The cofactor is Mg(2+).

In terms of biological role, the heterodimer acts as both an ATP-dependent DNA helicase and an ATP-dependent, dual-direction single-stranded exonuclease. Recognizes the chi site generating a DNA molecule suitable for the initiation of homologous recombination. This subunit has 5' -&gt; 3' nuclease activity but not helicase activity. The polypeptide is ATP-dependent helicase/deoxyribonuclease subunit B (Lacticaseibacillus paracasei (strain ATCC 334 / BCRC 17002 / CCUG 31169 / CIP 107868 / KCTC 3260 / NRRL B-441) (Lactobacillus paracasei)).